The sequence spans 188 residues: Translation machinery-associated protein 22 (188 aa).

The region spanning 96-167 (VTIKRIERNK…EIEEFLLEKY (72 aa)) is the SUI1 domain.

Belongs to the DENR family. Interacts with the 40S ribosomal subunit.

The protein localises to the cytoplasm. In Chaetomium globosum (strain ATCC 6205 / CBS 148.51 / DSM 1962 / NBRC 6347 / NRRL 1970) (Soil fungus), this protein is Translation machinery-associated protein 22 (TMA22).